Here is a 166-residue protein sequence, read N- to C-terminus: Regulatory protein RecX (166 aa).

This sequence belongs to the RecX family.

It localises to the cytoplasm. In terms of biological role, modulates RecA activity. The chain is Regulatory protein RecX from Escherichia fergusonii (strain ATCC 35469 / DSM 13698 / CCUG 18766 / IAM 14443 / JCM 21226 / LMG 7866 / NBRC 102419 / NCTC 12128 / CDC 0568-73).